The chain runs to 547 residues: Collagen EMF1-alpha (547 aa).

2 disordered regions span residues 1–99 (GVPG…APGV) and 116–311 (GPDG…GGGI). The interval 1-280 (GVPGPNGDVG…QGPRGGQGPK (280 aa)) is triple-helical region. 2 stretches are compositionally biased toward low complexity: residues 27-69 (QGPD…IRGQ) and 160-175 (QGSKGVVGPKGVVGPQ). Position 187 is an allysine (lysine 187). Positions 219–228 (VKGEKGEVGD) are enriched in basic and acidic residues. Low complexity predominate over residues 246-271 (DAGPAGPIGDAGIQGPPGQDGPTGAQ). Gly residues predominate over residues 272–281 (GPRGGQGPKG). The segment at 308–336 (GGGIILVPVNDQNPTRSPVSGSVFYRGQA) is telopeptide. Positions 337-547 (EETDVNLGSV…GFEMGPACFY (211 aa)) are cleaved as a propeptide — C-terminal propeptide. The Fibrillar collagen NC1 domain maps to 343-547 (LGSVADVIEL…GFEMGPACFY (205 aa)). Asparagine 381 and asparagine 406 each carry an N-linked (GlcNAc...) asparagine glycan.

The protein belongs to the fibrillar collagen family.

The protein resides in the secreted. It localises to the extracellular space. Its subcellular location is the extracellular matrix. The sequence is that of Collagen EMF1-alpha (COLF1) from Ephydatia muelleri (Mueller's freshwater sponge).